A 73-amino-acid chain; its full sequence is Putative membrane protein insertion efficiency factor (73 aa).

The protein belongs to the UPF0161 family.

The protein resides in the cell inner membrane. In terms of biological role, could be involved in insertion of integral membrane proteins into the membrane. The protein is Putative membrane protein insertion efficiency factor of Neisseria meningitidis serogroup C / serotype 2a (strain ATCC 700532 / DSM 15464 / FAM18).